The chain runs to 316 residues: Apolipoprotein E (316 aa).

An N-terminal signal peptide occupies residues 1-18; that stretch reads MKVLWVALVITLLAGCQA. 8 tandem repeats follow at residues 79–100, 101–122, 123–144, 145–166, 167–188, 189–210, 211–232, and 233–254. The tract at residues 79 to 254 is 8 X 22 AA approximate tandem repeats; it reads VLMDETMKEV…HLEEMREQLE (176 aa). Residues 157–167 form an LDL and other lipoprotein receptors binding region; that stretch reads HLRKLRKRLLR. 161-164 contacts heparin; it reads LRKR. A lipid-binding and lipoprotein association region spans residues 209–289; sequence AATVGTLASQ…SWFEPLVEDM (81 aa). 228–235 is a binding site for heparin; it reads HQKLRGRM. The tract at residues 265 to 316 is homooligomerization; the sequence is SQMRLQAEAFQARLKSWFEPLVEDMQRQWAGLVEKVQLAMATGPTSAPIENN. A specificity for association with VLDL region spans residues 277–289; it reads RLKSWFEPLVEDM.

The protein belongs to the apolipoprotein A1/A4/E family. As to quaternary structure, homotetramer. May interact with ABCA1; functionally associated with ABCA1 in the biogenesis of HDLs. May interact with APP/A4 amyloid-beta peptide; the interaction is extremely stable in vitro but its physiological significance is unclear. May interact with MAPT. May interact with MAP2. In the cerebrospinal fluid, interacts with secreted SORL1. Interacts with PMEL; this allows the loading of PMEL luminal fragment on ILVs to induce fibril nucleation. APOE exists as multiple glycosylated and sialylated glycoforms within cells and in plasma. The extent of glycosylation and sialylation are tissue and context specific. Post-translationally, glycated in plasma VLDL. In terms of processing, phosphorylated by FAM20C in the extracellular medium.

Its subcellular location is the secreted. The protein resides in the extracellular space. The protein localises to the extracellular matrix. It localises to the extracellular vesicle. It is found in the endosome. Its subcellular location is the multivesicular body. Functionally, APOE is an apolipoprotein, a protein associating with lipid particles, that mainly functions in lipoprotein-mediated lipid transport between organs via the plasma and interstitial fluids. APOE is a core component of plasma lipoproteins and is involved in their production, conversion and clearance. Apolipoproteins are amphipathic molecules that interact both with lipids of the lipoprotein particle core and the aqueous environment of the plasma. As such, APOE associates with chylomicrons, chylomicron remnants, very low density lipoproteins (VLDL) and intermediate density lipoproteins (IDL) but shows a preferential binding to high-density lipoproteins (HDL). It also binds a wide range of cellular receptors including the LDL receptor/LDLR and the very low-density lipoprotein receptor/VLDLR that mediate the cellular uptake of the APOE-containing lipoprotein particles. Finally, APOE also has a heparin-binding activity and binds heparan-sulfate proteoglycans on the surface of cells, a property that supports the capture and the receptor-mediated uptake of APOE-containing lipoproteins by cells. The protein is Apolipoprotein E (APOE) of Tursiops truncatus (Atlantic bottle-nosed dolphin).